The sequence spans 594 residues: Glutamate decarboxylase 1 (594 aa).

Residues 1-13 are compositionally biased toward low complexity; sequence MASSTPSSSATSS. The disordered stretch occupies residues 1-25; sequence MASSTPSSSATSSNAGPDPNTTNLR. Ser-78 bears the Phosphoserine mark. Residue 190-192 coordinates 4-aminobutanoate; the sequence is QLS. At Lys-405 the chain carries N6-(pyridoxal phosphate)lysine. Arg-567 is a binding site for 4-aminobutanoate.

The protein belongs to the group II decarboxylase family. In terms of assembly, homodimer. Pyridoxal 5'-phosphate is required as a cofactor.

It carries out the reaction L-glutamate + H(+) = 4-aminobutanoate + CO2. Functionally, catalyzes the synthesis of the inhibitory neurotransmitter gamma-aminobutyric acid (GABA) with pyridoxal 5'-phosphate as cofactor. This Sus scrofa (Pig) protein is Glutamate decarboxylase 1 (GAD1).